The following is a 102-amino-acid chain: Small ribosomal subunit protein uS10 (102 aa).

It belongs to the universal ribosomal protein uS10 family. As to quaternary structure, part of the 30S ribosomal subunit.

Involved in the binding of tRNA to the ribosomes. The chain is Small ribosomal subunit protein uS10 from Nocardioides sp. (strain ATCC BAA-499 / JS614).